Here is a 506-residue protein sequence, read N- to C-terminus: Maturase K (506 aa).

This sequence belongs to the intron maturase 2 family. MatK subfamily.

It localises to the plastid. Its subcellular location is the chloroplast. Usually encoded in the trnK tRNA gene intron. Probably assists in splicing its own and other chloroplast group II introns. This Trifolium microcephalum (Small-head clover) protein is Maturase K.